Reading from the N-terminus, the 301-residue chain is D-alanine--D-alanine ligase (301 aa).

Residues 101–296 (KLMWRAAGLA…YPTLVRRVLE (196 aa)) form the ATP-grasp domain. 127 to 182 (EEELGLPLFVKPAREGSSIGVTKVKERGALKAAYEEAARHDPLVIAEKGVMGGEYT) is a binding site for ATP. The Mg(2+) site is built by Asp250, Glu263, and Asn265.

Belongs to the D-alanine--D-alanine ligase family. It depends on Mg(2+) as a cofactor. The cofactor is Mn(2+).

It localises to the cytoplasm. The catalysed reaction is 2 D-alanine + ATP = D-alanyl-D-alanine + ADP + phosphate + H(+). Its pathway is cell wall biogenesis; peptidoglycan biosynthesis. Functionally, cell wall formation. The sequence is that of D-alanine--D-alanine ligase from Dechloromonas aromatica (strain RCB).